We begin with the raw amino-acid sequence, 469 residues long: Uronate isomerase (469 aa).

Belongs to the metallo-dependent hydrolases superfamily. Uronate isomerase family.

The catalysed reaction is D-glucuronate = D-fructuronate. It carries out the reaction aldehydo-D-galacturonate = keto-D-tagaturonate. Its pathway is carbohydrate metabolism; pentose and glucuronate interconversion. The sequence is that of Uronate isomerase from Edwardsiella ictaluri (strain 93-146).